Here is a 147-residue protein sequence, read N- to C-terminus: Nitric oxide reductase subunit C (147 aa).

A helical; Signal-anchor transmembrane segment spans residues 13 to 29; sequence VFYGGSLFFIAVFVGLT. Positions 59, 62, and 63 each coordinate heme c.

As to quaternary structure, heterodimer of cytochromes b (large subunit) and c (small subunit).

It localises to the cell membrane. Component of the anaerobic respiratory chain that transforms nitrate to dinitrogen (denitrification). This is Nitric oxide reductase subunit C (norC) from Cereibacter sphaeroides (strain ATCC 17025 / ATH 2.4.3) (Rhodobacter sphaeroides).